A 674-amino-acid chain; its full sequence is tRNA 5-methylaminomethyl-2-thiouridine biosynthesis bifunctional protein MnmC (674 aa).

Residues 1-237 form a tRNA (mnm(5)s(2)U34)-methyltransferase region; that stretch reads MLTSYQLESP…KREMTVGELN (237 aa). The segment at 270–674 is FAD-dependent cmnm(5)s(2)U34 oxidoreductase; that stretch reads VGAGLAGANT…IRDLKRSQIL (405 aa).

It in the N-terminal section; belongs to the methyltransferase superfamily. tRNA (mnm(5)s(2)U34)-methyltransferase family. The protein in the C-terminal section; belongs to the DAO family. FAD is required as a cofactor.

Its subcellular location is the cytoplasm. It catalyses the reaction 5-aminomethyl-2-thiouridine(34) in tRNA + S-adenosyl-L-methionine = 5-methylaminomethyl-2-thiouridine(34) in tRNA + S-adenosyl-L-homocysteine + H(+). In terms of biological role, catalyzes the last two steps in the biosynthesis of 5-methylaminomethyl-2-thiouridine (mnm(5)s(2)U) at the wobble position (U34) in tRNA. Catalyzes the FAD-dependent demodification of cmnm(5)s(2)U34 to nm(5)s(2)U34, followed by the transfer of a methyl group from S-adenosyl-L-methionine to nm(5)s(2)U34, to form mnm(5)s(2)U34. The protein is tRNA 5-methylaminomethyl-2-thiouridine biosynthesis bifunctional protein MnmC of Marinomonas sp. (strain MWYL1).